We begin with the raw amino-acid sequence, 187 residues long: Elongation factor P (187 aa).

This sequence belongs to the elongation factor P family.

The protein localises to the cytoplasm. It participates in protein biosynthesis; polypeptide chain elongation. Involved in peptide bond synthesis. Stimulates efficient translation and peptide-bond synthesis on native or reconstituted 70S ribosomes in vitro. Probably functions indirectly by altering the affinity of the ribosome for aminoacyl-tRNA, thus increasing their reactivity as acceptors for peptidyl transferase. The polypeptide is Elongation factor P (Desulforapulum autotrophicum (strain ATCC 43914 / DSM 3382 / VKM B-1955 / HRM2) (Desulfobacterium autotrophicum)).